The primary structure comprises 2434 residues: ATP-binding cassette sub-family A member 2 (2434 aa).

Asn14 carries N-linked (GlcNAc...) asparagine glycosylation. 2 helical membrane-spanning segments follow: residues 22–42 (PWVL…LLGL) and 54–74 (AFYT…QSLC). N-linked (GlcNAc...) asparagine glycosylation is found at Asn89, Asn168, and Asn173. Gln271 bears the N5-methylglutamine mark. 13 N-linked (GlcNAc...) asparagine glycosylation sites follow: Asn305, Asn368, Asn379, Asn420, Asn432, Asn476, Asn484, Asn494, Asn530, Asn549, Asn590, Asn600, and Asn628. Over residues 354–369 (RAPAPQAGSPSGPANS) the composition is skewed to low complexity. Positions 354–396 (RAPAPQAGSPSGPANSTGVGANTGPNTTVEEGTQSPVTPASPD) are disordered. A compositionally biased stretch (polar residues) spans 370-396 (TGVGANTGPNTTVEEGTQSPVTPASPD). The next 6 helical transmembrane spans lie at 699–719 (FLFV…VYSV), 750–770 (VAWF…LTAI), 782–802 (VLII…FCFL), 813–833 (ASAC…YVAI), 857–877 (AFGL…GIQW), and 893–913 (LLAV…TWYI). The region spanning 990–1221 (VCVDKLTKVY…YGDGYRLTLV (232 aa)) is the ABC transporter 1 domain. ATP is bound at residue 1024–1031 (GHNGAGKT). The disordered stretch occupies residues 1225–1246 (AEPGTSQEPGMASSPSGRPQLS). The segment covering 1228–1246 (GTSQEPGMASSPSGRPQLS) has biased composition (polar residues). The residue at position 1238 (Ser1238) is a Phosphoserine. N-linked (GlcNAc...) asparagine glycosylation is present at Asn1247. 2 positions are modified to phosphoserine: Ser1327 and Ser1331. The helical transmembrane segment at 1461-1481 (ILLPAFFVCVAMTVALSVPEI) threads the bilayer. 3 N-linked (GlcNAc...) asparagine glycosylation sites follow: Asn1496, Asn1549, and Asn1557. The segment at 1587–1606 (NFVPPPPSPAPSDSPLSPDE) is disordered. Residues 1589–1598 (VPPPPSPAPS) are compositionally biased toward pro residues. N-linked (GlcNAc...) asparagine glycosylation is found at Asn1613, Asn1678, and Asn1776. A run of 5 helical transmembrane segments spans residues 1793–1813 (VVIA…FVVF), 1842–1862 (VWDM…LFVF), 1873–1893 (FPAV…IMYP), 1906–1926 (VFLI…TFLL), and 1992–2012 (GLVA…MCQY). The 236-residue stretch at 2051 to 2286 (VKIENLTKVY…FGDGYMITVR (236 aa)) folds into the ABC transporter 2 domain. Asn2055 is a glycosylation site (N-linked (GlcNAc...) asparagine). Position 2088–2095 (2088–2095 (GVNGAGKT)) interacts with ATP. Position 2411 is a phosphothreonine (Thr2411).

This sequence belongs to the ABC transporter superfamily. ABCA family. N-glycosylated. In terms of processing, methylated at Gln-271 by N6AMT1. Expressed at high levels in brain, at moderate levels in heart, kidney and lung, and at low levels in skeletal muscle, stomach, spleen, colon and pancreas. Not detected in the liver or small intestine. In brain, highly expressed in white matter and detected in oligodendrocytes. Expressed in cerebellum as well as the anterior commissure. Expressed mainly in the white matter but is also scattered in gray matter throughout the whole brain. Expressed in myelinating cells of both ventral and dorsal restricted regions in newborn spinal cord. Expressed in non-myelin-forming as well as in myelin-forming Schwann cells in the sciatic nerve.

It is found in the endosome membrane. Its subcellular location is the lysosome membrane. In terms of biological role, probable transporter, its natural substrate has not been found yet. May have a role in macrophage lipid metabolism and neural development. May play a role in myelination, perhaps as a transporter for certain kinds of myelin chemical components. May play an important role in gamma-secretase processing of APP and thus in amyloid-beta peptide generation. Regulates esterification of plasma membrane cholesterol by modulation of sphingolipid metabolism. Its function is as follows. Probable lipid transporter that modulates cholesterol sequestration in the late endosome/lysosome by regulating the intracellular sphingolipid metabolism, in turn participates in cholesterol homeostasis. May alter the transbilayer distribution of ceramide in the intraluminal membrane lipid bilayer, favoring its retention in the outer leaflet that results in increased acid ceramidase activity in the late endosome/lysosome, facilitating ceramide deacylation to sphingosine leading to the sequestration of free cholesterol in lysosomes. In addition regulates amyloid-beta production either by activating a signaling pathway that regulates amyloid precursor protein transcription through the modulation of sphingolipid metabolism or through its role in gamma-secretase processing of APP. May play a role in myelin formation. This Rattus norvegicus (Rat) protein is ATP-binding cassette sub-family A member 2.